Consider the following 177-residue polypeptide: Large ribosomal subunit protein uL6 (177 aa).

Belongs to the universal ribosomal protein uL6 family. As to quaternary structure, part of the 50S ribosomal subunit.

This protein binds to the 23S rRNA, and is important in its secondary structure. It is located near the subunit interface in the base of the L7/L12 stalk, and near the tRNA binding site of the peptidyltransferase center. This is Large ribosomal subunit protein uL6 from Psychromonas ingrahamii (strain DSM 17664 / CCUG 51855 / 37).